The primary structure comprises 126 residues: Fluoride-specific ion channel FluC (126 aa).

Helical transmembrane passes span 3-23 (PLGF…RWGL), 36-56 (YGTL…VGFF), 68-88 (LLAI…SSEA), and 99-119 (WALL…ALGL). Na(+) is bound by residues G76 and T79.

This sequence belongs to the fluoride channel Fluc/FEX (TC 1.A.43) family.

Its subcellular location is the cell inner membrane. It catalyses the reaction fluoride(in) = fluoride(out). With respect to regulation, na(+) is not transported, but it plays an essential structural role and its presence is essential for fluoride channel function. In terms of biological role, fluoride-specific ion channel. Important for reducing fluoride concentration in the cell, thus reducing its toxicity. This Cupriavidus pinatubonensis (strain JMP 134 / LMG 1197) (Cupriavidus necator (strain JMP 134)) protein is Fluoride-specific ion channel FluC.